A 289-amino-acid chain; its full sequence is ATP synthase gamma chain (289 aa).

It belongs to the ATPase gamma chain family. As to quaternary structure, F-type ATPases have 2 components, CF(1) - the catalytic core - and CF(0) - the membrane proton channel. CF(1) has five subunits: alpha(3), beta(3), gamma(1), delta(1), epsilon(1). CF(0) has three main subunits: a, b and c.

It localises to the cell inner membrane. Functionally, produces ATP from ADP in the presence of a proton gradient across the membrane. The gamma chain is believed to be important in regulating ATPase activity and the flow of protons through the CF(0) complex. This chain is ATP synthase gamma chain, found in Phocaeicola vulgatus (strain ATCC 8482 / DSM 1447 / JCM 5826 / CCUG 4940 / NBRC 14291 / NCTC 11154) (Bacteroides vulgatus).